The sequence spans 213 residues: Imidazole glycerol phosphate synthase subunit HisH 1 (213 aa).

Residues 3–213 (SVSIVDYGVG…LSIIQQFLQI (211 aa)) form the Glutamine amidotransferase type-1 domain. Residue Cys81 is the Nucleophile of the active site. Active-site residues include His195 and Glu197.

In terms of assembly, heterodimer of HisH and HisF.

The protein resides in the cytoplasm. It catalyses the reaction 5-[(5-phospho-1-deoxy-D-ribulos-1-ylimino)methylamino]-1-(5-phospho-beta-D-ribosyl)imidazole-4-carboxamide + L-glutamine = D-erythro-1-(imidazol-4-yl)glycerol 3-phosphate + 5-amino-1-(5-phospho-beta-D-ribosyl)imidazole-4-carboxamide + L-glutamate + H(+). The enzyme catalyses L-glutamine + H2O = L-glutamate + NH4(+). It participates in amino-acid biosynthesis; L-histidine biosynthesis; L-histidine from 5-phospho-alpha-D-ribose 1-diphosphate: step 5/9. Its function is as follows. IGPS catalyzes the conversion of PRFAR and glutamine to IGP, AICAR and glutamate. The HisH subunit provides the glutamine amidotransferase activity that produces the ammonia necessary to HisF for the synthesis of IGP and AICAR. This is Imidazole glycerol phosphate synthase subunit HisH 1 from Legionella pneumophila (strain Paris).